The chain runs to 467 residues: MVLAFQLVSFTYIWIILKPNVCAASNIKMTHQRCSSSMKQTCKQETRMKKDDSTKARPQKYEQLLHIEDNDFAMRPGFGGSPVPVGIDVHVESIDSISETNMDFTMTFYLRHYWKDERLSFPSTANKSMTFDHRLTRKIWVPDIFFVHSKRSFIHDTTMENIMLRVHPDGNVLLSLRITVSAMCFMDFSRFPLDTQNCSLELESYAYNEDDLMLYWKHGNKSLNTEEHMSLSQFFIEDFSASSGLAFYSSTGWYNRLFINFVLRRHVFFFVLQTYFPAILMVMLSWVSFWIDRRAVPARVSLGITTVLTMSTIITAVSASMPQVSYLKAVDVYLWVSSLFVFLSVIEYAAVNYLTTVEERKQFKKTGKISRMYNIDAVQAMAFDGCYHDSEIDMDQTSLSLNSEDFMRRKSICSPSTDSSRIKRRKSLGGHVGRIILENNHVIDTYSRILFPIVYILFNLFYWGVYV.

The first 24 residues, 1–24, serve as a signal peptide directing secretion; the sequence is MVLAFQLVSFTYIWIILKPNVCAA. The Extracellular segment spans residues 25 to 266; it reads SNIKMTHQRC…LFINFVLRRH (242 aa). 4-aminobutanoate is bound by residues R111 and S175. Cysteines 184 and 198 form a disulfide. E203 serves as a coordination point for 4-aminobutanoate. Residue N220 is glycosylated (N-linked (GlcNAc...) asparagine). Residues 267-287 traverse the membrane as a helical segment; the sequence is VFFFVLQTYFPAILMVMLSWV. Residues 288–299 are Cytoplasmic-facing; the sequence is SFWIDRRAVPAR. Residues 300–320 form a helical membrane-spanning segment; it reads VSLGITTVLTMSTIITAVSAS. Residues 321-331 lie on the Extracellular side of the membrane; sequence MPQVSYLKAVD. A helical transmembrane segment spans residues 332–352; it reads VYLWVSSLFVFLSVIEYAAVN. The tract at residues 347-448 is interaction with SQSTM1; it reads EYAAVNYLTT…NNHVIDTYSR (102 aa). Residues 353-446 lie on the Cytoplasmic side of the membrane; the sequence is YLTTVEERKQ…LENNHVIDTY (94 aa). A helical membrane pass occupies residues 447–467; sequence SRILFPIVYILFNLFYWGVYV.

Belongs to the ligand-gated ion channel (TC 1.A.9) family. Gamma-aminobutyric acid receptor (TC 1.A.9.5) subfamily. GABRR3 sub-subfamily. Three rho subunits (rho-1/GBRR1, rho-2/GBRR2 and rho-3/GBRR3) coassemble either to form functional homopentamers or heteropentamers. Forms a ternary complex with SQSTM1 and PRKCZ.

The protein resides in the postsynaptic cell membrane. It is found in the cell membrane. It catalyses the reaction chloride(in) = chloride(out). Inhibited by TPMPA, a rho-specific antagonist, when forming a homopentamer. Its function is as follows. Rho subunit of the pentameric ligand-gated chloride channels responsible for mediating the effects of gamma-aminobutyric acid (GABA), the major inhibitory neurotransmitter in the brain. Rho-containing GABA-gated chloride channels are a subclass of GABA(A) receptors (GABAARs) entirely composed of rho subunits, where GABA molecules bind at the rho intersubunit interfaces. When activated by GABA, rho-GABAARs selectively allow the flow of chloride anions across the cell membrane down their electrochemical gradient. This Homo sapiens (Human) protein is Gamma-aminobutyric acid receptor subunit rho-3.